Here is a 186-residue protein sequence, read N- to C-terminus: Low amplitude and bright protein LabA (186 aa).

Functions in an output pathway of the circadian clock. One of three clock output pathways. Involved in negative feedback regulation of KaiC; deletion leads to overexpression of KaiC protein and decreases the amplitude of the circadian response. Overexpression reduces the expression of circadian genes. This is Low amplitude and bright protein LabA from Synechococcus elongatus (strain ATCC 33912 / PCC 7942 / FACHB-805) (Anacystis nidulans R2).